The primary structure comprises 289 residues: Glucosamine-6-phosphate deaminase 1 (289 aa).

Lysine 64 bears the N6-acetyllysine mark. Aspartate 72 serves as the catalytic Proton acceptor; for enolization step. Catalysis depends on aspartate 141, which acts as the For ring-opening step. Histidine 143 serves as the catalytic Proton acceptor; for ring-opening step. Residue glutamate 148 is the For ring-opening step of the active site. The residue at position 161 (threonine 161) is a Phosphothreonine.

It belongs to the glucosamine/galactosamine-6-phosphate isomerase family. Homohexamer. In terms of tissue distribution, at the equatorial segment of the sperm head.

It localises to the cytoplasm. The catalysed reaction is alpha-D-glucosamine 6-phosphate + H2O = beta-D-fructose 6-phosphate + NH4(+). The protein operates within nucleotide-sugar biosynthesis; UDP-N-acetyl-alpha-D-glucosamine biosynthesis; alpha-D-glucosamine 6-phosphate from D-fructose 6-phosphate: step 1/1. Its activity is regulated as follows. Allosterically activated by N-acetylglucosamine-6-phosphate (GlcNAc6P). Catalyzes the reversible conversion of alpha-D-glucosamine 6-phosphate (GlcN-6P) into beta-D-fructose 6-phosphate (Fru-6P) and ammonium ion, a regulatory reaction step in de novo uridine diphosphate-N-acetyl-alpha-D-glucosamine (UDP-GlcNAc) biosynthesis via hexosamine pathway. Deamination is coupled to aldo-keto isomerization mediating the metabolic flux from UDP-GlcNAc toward Fru-6P. At high ammonium level can drive amination and isomerization of Fru-6P toward hexosamines and UDP-GlcNAc synthesis. Has a role in fine tuning the metabolic fluctuations of cytosolic UDP-GlcNAc and their effects on hyaluronan synthesis that occur during tissue remodeling. Seems to trigger calcium oscillations in mammalian eggs. These oscillations serve as the essential trigger for egg activation and early development of the embryo. The sequence is that of Glucosamine-6-phosphate deaminase 1 from Mesocricetus auratus (Golden hamster).